The sequence spans 1232 residues: Anoctamin-8 (1232 aa).

Residues 1 to 32 form a disordered region; that stretch reads MAEAASGAGGTSLEGERGKRPPPEGEPAAPAS. Alanine 2 is modified (N-acetylalanine). Over 2 to 244 the chain is Extracellular; it reads AEAASGAGGT…DDICDYFGVK (243 aa). Positions 14–23 are enriched in basic and acidic residues; the sequence is EGERGKRPPP. Residues 245-265 form a helical membrane-spanning segment; the sequence is IAMYFAWLGFYTSAMVYPAVF. At 266–281 the chain is on the cytoplasmic side; it reads GSVLYTFTEADQTSRD. The chain crosses the membrane as a helical span at residues 282 to 302; the sequence is VSCVVFALFNVIWSTLFLEEW. Residues 303–356 are Extracellular-facing; sequence KRRGAELAYKWGTLDSPGEAVEEPRPQFRGVRRISPITRAEEFYYPPWKRLLFQ. A Phosphoserine modification is found at serine 318. The chain crosses the membrane as a helical span at residues 357 to 377; that stretch reads LLVSLPLCLACLVCVFLLMLG. Residues 378–400 lie on the Cytoplasmic side of the membrane; sequence CFQLQELVLSVKGLPRLARFLPK. A helical transmembrane segment spans residues 401–421; it reads VMLALLVSVSAEGYKKLAIWL. The Extracellular segment spans residues 422-437; sequence NDMENYRLESAYEKHL. The helical transmembrane segment at 438–458 threads the bilayer; sequence IIKVVLFQFVNSYLSLFYIGF. Topologically, residues 459 to 750 are cytoplasmic; it reads YLKDMERLKE…YEDTFQDYQE (292 aa). The tract at residues 524 to 650 is disordered; sequence RRLEPQADEG…SPTMVEKGLE (127 aa). Gly residues predominate over residues 532–551; the sequence is EGGGGGSGGGGRRCLSGGCG. A compositionally biased stretch (acidic residues) spans 582 to 606; the sequence is EEDEDDEEEEDEEEEEDEEEGEEGG. Position 669 is a phosphoserine (serine 669). Residues 681–728 are disordered; the sequence is RAGGEGRDQGPDGGPDPEPGSNSDSTRRQRRQNRSSWIDPPEEEHSPQ. Residues 751-771 traverse the membrane as a helical segment; that stretch reads MFVQFGYVVLFSSAFPLAALC. Residues 772–807 are Extracellular-facing; the sequence is ALVNNLIEIRSDAFKLCTGLQRPFGQRVESIGQWQK. Serine 801 is subject to Phosphoserine; by FAM20C. A helical transmembrane segment spans residues 808-828; sequence VMEAMGVLAIVVNCYLIGQCG. At 829–841 the chain is on the cytoplasmic side; sequence QLQRLFPWLSPEA. A helical transmembrane segment spans residues 842-862; the sequence is AIVSVVVLEHFALLLKYLIHV. Topologically, residues 863–1232 are extracellular; the sequence is AIPDIPGWVA…QAVCWPSGWH (370 aa). 3 disordered regions span residues 888–970, 997–1152, and 1174–1232; these read RHER…GSLL, LAAA…WQWD, and PPCA…SGWH. Basic and acidic residues predominate over residues 904–932; sequence RREEEERQRHAEHHARREHDSGGREEARA. Low complexity-rich tracts occupy residues 933–953 and 997–1006; these read EGSG…AKGS and LAAAGAGATT. Asymmetric dimethylarginine; alternate is present on arginine 1020. Arginine 1020 carries the post-translational modification Omega-N-methylarginine; alternate. The span at 1031–1043 shows a compositional bias: basic and acidic residues; it reads KSPETRRDSERSH. The span at 1078–1087 shows a compositional bias: polar residues; it reads TPSSGSSRVQ. Composition is skewed to pro residues over residues 1130-1145 and 1197-1221; these read PAPP…PTPP and LPPP…PSPS.

Belongs to the anoctamin family. Expressed in embryonic stem cells, fetal brain and neural tissues.

It localises to the cell membrane. In terms of biological role, does not exhibit calcium-activated chloride channel (CaCC) activity. This Homo sapiens (Human) protein is Anoctamin-8 (ANO8).